The primary structure comprises 103 residues: Translation initiation factor 1A (103 aa).

The S1-like domain maps to 11–86; the sequence is TRVRTPRENE…EKCDVIWRYT (76 aa).

The protein belongs to the eIF-1A family.

Functionally, seems to be required for maximal rate of protein biosynthesis. Enhances ribosome dissociation into subunits and stabilizes the binding of the initiator Met-tRNA(I) to 40 S ribosomal subunits. This chain is Translation initiation factor 1A (eIF1A), found in Methanococcus maripaludis (strain C5 / ATCC BAA-1333).